Here is a 709-residue protein sequence, read N- to C-terminus: Nucleobase-ascorbate transporter 12 (709 aa).

Residues 1-145 (MSSSDPKPGP…GSGDPVRRPG (145 aa)) form a disordered region. Residues 7–19 (KPGPKPGPWPPTP) are compositionally biased toward pro residues. Ser-40 carries the post-translational modification Phosphoserine. Residues 41–53 (GETTATDSSSGQL) are compositionally biased toward polar residues. 2 stretches are compositionally biased toward basic and acidic residues: residues 89-98 (ETDKDKKEKP) and 113-122 (QPVKRRRDSD). 12 helical membrane-spanning segments follow: residues 190–210 (YLSMLGSLILVPLVIVPAMGG), 218–238 (VVSTVLFVSGITTLLHTSFGS), 240–260 (LPLIQGPSFVFLAPALAIINS), 283–303 (IIIGSAFQAVLGYSGLMSLIL), 308–328 (PVVVAPTVAAVGLSFYSYGFP), 329–349 (LVGKCLEIGVVQILLVIIFAL), 361–381 (IFLIYAVPLSLAITWAAAFLL), 438–458 (WGVPLFNWKMAFVMCVVSVIA), 530–550 (GACVLVIFSLVGKVGGFLASI), 551–571 (PQVMVASLLCFMWAMFTALGL), 585–605 (IIIVGLSLFFSLSVPAYFQQY), and 639–659 (YVMNTLLSMSMVIAFIMAVIL).

The protein belongs to the nucleobase:cation symporter-2 (NCS2) (TC 2.A.40) family. Ubiquitous.

Its subcellular location is the cell membrane. The chain is Nucleobase-ascorbate transporter 12 (NAT12) from Arabidopsis thaliana (Mouse-ear cress).